We begin with the raw amino-acid sequence, 362 residues long: MIISKQLFLLFFLLFFIFPLRHASNPSKCSSSNSRPHRCGPLEVPIRFPFCDHPLFNLLCTNLNNTVLQLPMSGTFFVQYIDYRKQQIYINDPENCLAKRLLTFNISGSPFSPRFDTLYTFLTCPNELVLPSWYPSIPCLSNSTSSFFATSNFALAESMLPSCQIVKRIYVPADSPFAETRFSSYLNQSLLLEWNSPNCRGCEIDYLRCGFKNKASPEVKCFGAKKSGHLSRAVVAVLICLSIIGAVILFVTCIAIRIHNTPRRRHWAVPAAAATVMQQPREVMATRGLDQSTIEKYKTMELGESRRPPGTNGIVCPICLSEYVSKETVRFIPECDHCFHAKCIDVWLKIHGSCPLCRNSRA.

A signal peptide spans M1 to A23. Residues V234 to I254 traverse the membrane as a helical segment. An RING-type; atypical zinc finger spans residues C316–R358.

The protein belongs to the RING-type zinc finger family. ATL subfamily.

It is found in the membrane. The enzyme catalyses S-ubiquitinyl-[E2 ubiquitin-conjugating enzyme]-L-cysteine + [acceptor protein]-L-lysine = [E2 ubiquitin-conjugating enzyme]-L-cysteine + N(6)-ubiquitinyl-[acceptor protein]-L-lysine.. It functions in the pathway protein modification; protein ubiquitination. The chain is Putative RING-H2 finger protein ATL21B (ATL21B) from Arabidopsis thaliana (Mouse-ear cress).